The following is a 222-amino-acid chain: Large ribosomal subunit protein uL1 (222 aa).

Belongs to the universal ribosomal protein uL1 family. Part of the 50S ribosomal subunit.

Its function is as follows. Binds directly to 23S rRNA. Probably involved in E site tRNA release. Functionally, protein L1 is also a translational repressor protein, it controls the translation of its operon by binding to its mRNA. The protein is Large ribosomal subunit protein uL1 of Pyrobaculum aerophilum (strain ATCC 51768 / DSM 7523 / JCM 9630 / CIP 104966 / NBRC 100827 / IM2).